A 384-amino-acid polypeptide reads, in one-letter code: Alanine racemase (384 aa).

K42 serves as the catalytic Proton acceptor; specific for D-alanine. K42 is subject to N6-(pyridoxal phosphate)lysine. R140 provides a ligand contact to substrate. Y271 acts as the Proton acceptor; specific for L-alanine in catalysis. M319 is a substrate binding site.

The protein belongs to the alanine racemase family. Homodimer. The cofactor is pyridoxal 5'-phosphate.

The enzyme catalyses L-alanine = D-alanine. Its pathway is amino-acid biosynthesis; D-alanine biosynthesis; D-alanine from L-alanine: step 1/1. Its function is as follows. Catalyzes the interconversion of L-alanine and D-alanine. The protein is Alanine racemase (alr) of Mycobacterium tuberculosis (strain CDC 1551 / Oshkosh).